We begin with the raw amino-acid sequence, 875 residues long: Pyrogallol hydroxytransferase large subunit (875 aa).

The tract at residues 82-104 (RKSFDPNGERNPQLRGAGLSKQD) is disordered. Residue Ser175 coordinates Mo-bis(molybdopterin guanine dinucleotide).

It belongs to the prokaryotic molybdopterin-containing oxidoreductase family. As to quaternary structure, heterodimer of a large and a small subunit. Requires Mo-bis(molybdopterin guanine dinucleotide) as cofactor.

It catalyses the reaction 1,2,3,5-tetrahydroxybenzene + 1,2,3-trihydroxybenzene = 1,2,3,5-tetrahydroxybenzene + 1,3,5-trihydroxybenzene. Isomerization of pyrogallol to phloroglucin. This chain is Pyrogallol hydroxytransferase large subunit (athL), found in Pelobacter acidigallici.